The following is a 310-amino-acid chain: Manganese ABC transporter substrate-binding lipoprotein PsaA (310 aa).

Residues 1 to 20 (MKKIASVLALFVALLFGLLA) form the signal peptide. The N-palmitoyl cysteine moiety is linked to residue C21. A lipid anchor (S-diacylglycerol cysteine) is attached at C21. Residues H68, H140, E206, and D281 each coordinate Mn(2+).

It belongs to the bacterial solute-binding protein 9 family. Lipoprotein receptor antigen (Lrai) subfamily.

It localises to the cell membrane. In terms of biological role, part of the ATP-binding cassette (ABC) transport system PsaABC involved in manganese import. Binds manganese with high affinity and specificity and delivers it to the membrane permease for translocation into the cytoplasm. Also acts as an adhesin which is involved on adherence to extracellular matrix. This Streptococcus pneumoniae protein is Manganese ABC transporter substrate-binding lipoprotein PsaA.